Here is a 431-residue protein sequence, read N- to C-terminus: L-ornithine N(5)-monooxygenase (431 aa).

Residues 40–48 (EKLPTFSWH) and Gln59 contribute to the FAD site. Lys64 contacts substrate. NADP(+) is bound by residues 202–205 (CGQS) and Arg228. Substrate contacts are provided by residues 242-245 (NSLY) and Asn273. NADP(+) is bound at residue 273 to 275 (NYS). An FAD-binding site is contributed by 399–401 (TLL). Ser402 contributes to the substrate binding site.

Belongs to the lysine N(6)-hydroxylase/L-ornithine N(5)-oxygenase family. It depends on FAD as a cofactor.

Its subcellular location is the cytoplasm. The protein localises to the nucleus. It catalyses the reaction L-ornithine + NADPH + O2 = N(5)-hydroxy-L-ornithine + NADP(+) + H2O. The enzyme catalyses L-ornithine + NADH + O2 = N(5)-hydroxy-L-ornithine + NAD(+) + H2O. Its pathway is siderophore biosynthesis; ferrichrome biosynthesis. Catalyzes the conversion of L-ornithine to N(5)-hydroxyornithine, the first step in the biosynthesis of all hydroxamate-containing siderophores, such as ferrichrome. This is L-ornithine N(5)-monooxygenase from Schizosaccharomyces pombe (strain 972 / ATCC 24843) (Fission yeast).